The following is a 92-amino-acid chain: Small ribosomal subunit protein uS17 (92 aa).

This sequence belongs to the universal ribosomal protein uS17 family. Part of the 30S ribosomal subunit.

One of the primary rRNA binding proteins, it binds specifically to the 5'-end of 16S ribosomal RNA. The polypeptide is Small ribosomal subunit protein uS17 (Wigglesworthia glossinidia brevipalpis).